A 362-amino-acid polypeptide reads, in one-letter code: Glutamate 5-kinase (362 aa).

Residue Lys-3 participates in ATP binding. Substrate contacts are provided by Ser-43, Asp-128, and Asn-140. ATP-binding positions include 160–161 and 202–208; these read TD and TGGMRTK. The region spanning 267–348 is the PUA domain; it reads AGAILIDDGA…REIENVLGYS (82 aa).

The protein belongs to the glutamate 5-kinase family.

It localises to the cytoplasm. It carries out the reaction L-glutamate + ATP = L-glutamyl 5-phosphate + ADP. It functions in the pathway amino-acid biosynthesis; L-proline biosynthesis; L-glutamate 5-semialdehyde from L-glutamate: step 1/2. Catalyzes the transfer of a phosphate group to glutamate to form L-glutamate 5-phosphate. The sequence is that of Glutamate 5-kinase from Xanthomonas euvesicatoria pv. vesicatoria (strain 85-10) (Xanthomonas campestris pv. vesicatoria).